Here is a 151-residue protein sequence, read N- to C-terminus: Large ribosomal subunit protein bL9 (151 aa).

It belongs to the bacterial ribosomal protein bL9 family.

Binds to the 23S rRNA. This chain is Large ribosomal subunit protein bL9, found in Thermosipho melanesiensis (strain DSM 12029 / CIP 104789 / BI429).